We begin with the raw amino-acid sequence, 310 residues long: 4-diphosphocytidyl-2-C-methyl-D-erythritol kinase (310 aa).

The active site involves K20. Residue 106 to 116 (PMGGGLGGGSS) participates in ATP binding. D148 is an active-site residue.

Belongs to the GHMP kinase family. IspE subfamily. As to quaternary structure, homodimer.

The enzyme catalyses 4-CDP-2-C-methyl-D-erythritol + ATP = 4-CDP-2-C-methyl-D-erythritol 2-phosphate + ADP + H(+). It functions in the pathway isoprenoid biosynthesis; isopentenyl diphosphate biosynthesis via DXP pathway; isopentenyl diphosphate from 1-deoxy-D-xylulose 5-phosphate: step 3/6. Functionally, catalyzes the phosphorylation of the position 2 hydroxy group of 4-diphosphocytidyl-2C-methyl-D-erythritol. This Yersinia pseudotuberculosis serotype O:3 (strain YPIII) protein is 4-diphosphocytidyl-2-C-methyl-D-erythritol kinase.